The sequence spans 678 residues: DNA ligase (678 aa).

NAD(+) contacts are provided by residues 47 to 51 (DSDYD), 96 to 97 (SL), and glutamate 122. The N6-AMP-lysine intermediate role is filled by lysine 124. Arginine 145, glutamate 182, lysine 300, and lysine 324 together coordinate NAD(+). Zn(2+)-binding residues include cysteine 418, cysteine 421, cysteine 436, and cysteine 442. Residues 602 to 678 (AHNESFTNKT…IFEEDLQNLL (77 aa)) form the BRCT domain.

This sequence belongs to the NAD-dependent DNA ligase family. LigA subfamily. Requires Mg(2+) as cofactor. It depends on Mn(2+) as a cofactor.

The catalysed reaction is NAD(+) + (deoxyribonucleotide)n-3'-hydroxyl + 5'-phospho-(deoxyribonucleotide)m = (deoxyribonucleotide)n+m + AMP + beta-nicotinamide D-nucleotide.. Its function is as follows. DNA ligase that catalyzes the formation of phosphodiester linkages between 5'-phosphoryl and 3'-hydroxyl groups in double-stranded DNA using NAD as a coenzyme and as the energy source for the reaction. It is essential for DNA replication and repair of damaged DNA. The sequence is that of DNA ligase from Francisella philomiragia subsp. philomiragia (strain ATCC 25017 / CCUG 19701 / FSC 153 / O#319-036).